A 496-amino-acid polypeptide reads, in one-letter code: Probable glycine dehydrogenase (decarboxylating) subunit 2 (496 aa).

Lys265 is modified (N6-(pyridoxal phosphate)lysine).

Belongs to the GcvP family. C-terminal subunit subfamily. The glycine cleavage system is composed of four proteins: P, T, L and H. In this organism, the P 'protein' is a heterodimer of two subunits. The cofactor is pyridoxal 5'-phosphate.

The catalysed reaction is N(6)-[(R)-lipoyl]-L-lysyl-[glycine-cleavage complex H protein] + glycine + H(+) = N(6)-[(R)-S(8)-aminomethyldihydrolipoyl]-L-lysyl-[glycine-cleavage complex H protein] + CO2. Its function is as follows. The glycine cleavage system catalyzes the degradation of glycine. The P protein binds the alpha-amino group of glycine through its pyridoxal phosphate cofactor; CO(2) is released and the remaining methylamine moiety is then transferred to the lipoamide cofactor of the H protein. In Thioalkalivibrio sulfidiphilus (strain HL-EbGR7), this protein is Probable glycine dehydrogenase (decarboxylating) subunit 2.